The chain runs to 178 residues: MSRIGKRIIEIPSSVQASVEGSKLLFKNSKEKHELETHNRVKITLENNQLSFQPVGEDAQSRAYWGTYGALANNIVIGLSTGFSKTLEVNGVGYKVALGNKTLDLSLGFSHPVKYPIPAGIEMVVEKNTITIKGSDKQKVGQVAAEIRSFRPPEPYKGKGVKYSDEVIIRKAGKTAKK.

This sequence belongs to the universal ribosomal protein uL6 family. As to quaternary structure, part of the 50S ribosomal subunit.

Its function is as follows. This protein binds to the 23S rRNA, and is important in its secondary structure. It is located near the subunit interface in the base of the L7/L12 stalk, and near the tRNA binding site of the peptidyltransferase center. This Helicobacter pylori (strain Shi470) protein is Large ribosomal subunit protein uL6.